The following is a 689-amino-acid chain: Glycine--tRNA ligase beta subunit (689 aa).

The protein belongs to the class-II aminoacyl-tRNA synthetase family. As to quaternary structure, tetramer of two alpha and two beta subunits.

Its subcellular location is the cytoplasm. The enzyme catalyses tRNA(Gly) + glycine + ATP = glycyl-tRNA(Gly) + AMP + diphosphate. The protein is Glycine--tRNA ligase beta subunit of Shigella boydii serotype 4 (strain Sb227).